The following is a 138-amino-acid chain: ATP synthase epsilon chain (138 aa).

It belongs to the ATPase epsilon chain family. In terms of assembly, F-type ATPases have 2 components, CF(1) - the catalytic core - and CF(0) - the membrane proton channel. CF(1) has five subunits: alpha(3), beta(3), gamma(1), delta(1), epsilon(1). CF(0) has three main subunits: a, b and c.

Its subcellular location is the cellular thylakoid membrane. In terms of biological role, produces ATP from ADP in the presence of a proton gradient across the membrane. This chain is ATP synthase epsilon chain, found in Cyanothece sp. (strain PCC 7425 / ATCC 29141).